A 147-amino-acid chain; its full sequence is D-aminoacyl-tRNA deacylase (147 aa).

Positions 136–137 (GP) match the Gly-cisPro motif, important for rejection of L-amino acids motif.

It belongs to the DTD family. As to quaternary structure, homodimer.

The protein resides in the cytoplasm. It carries out the reaction glycyl-tRNA(Ala) + H2O = tRNA(Ala) + glycine + H(+). The catalysed reaction is a D-aminoacyl-tRNA + H2O = a tRNA + a D-alpha-amino acid + H(+). An aminoacyl-tRNA editing enzyme that deacylates mischarged D-aminoacyl-tRNAs. Also deacylates mischarged glycyl-tRNA(Ala), protecting cells against glycine mischarging by AlaRS. Acts via tRNA-based rather than protein-based catalysis; rejects L-amino acids rather than detecting D-amino acids in the active site. By recycling D-aminoacyl-tRNA to D-amino acids and free tRNA molecules, this enzyme counteracts the toxicity associated with the formation of D-aminoacyl-tRNA entities in vivo and helps enforce protein L-homochirality. This chain is D-aminoacyl-tRNA deacylase, found in Streptococcus uberis (strain ATCC BAA-854 / 0140J).